The following is a 345-amino-acid chain: Platelet-derived growth factor C (345 aa).

An N-terminal signal peptide occupies residues 1–22; sequence MLLLGLLLLTSALAGQRTGTRA. Residues 24–33 are compositionally biased toward polar residues; sequence SNLSSKLQLS. The disordered stretch occupies residues 24-45; sequence SNLSSKLQLSSDKEQNGVQDPR. Asn-25 is a glycosylation site (N-linked (GlcNAc...) asparagine). A compositionally biased stretch (basic and acidic residues) spans 34 to 45; the sequence is SDKEQNGVQDPR. The region spanning 46-163 is the CUB domain; the sequence is HERVVTISGN…PGFCIHYSII (118 aa). N-linked (GlcNAc...) asparagine glycosylation occurs at Asn-55. 4 disulfide bridges follow: Cys-104–Cys-124, Cys-250–Cys-294, Cys-280–Cys-335, and Cys-287–Cys-337.

The protein belongs to the PDGF/VEGF growth factor family. As to quaternary structure, homodimer; disulfide-linked. Interacts with PDGFRA homodimers, and with heterodimers formed by PDGFRA and PDGFRB. Interacts (via CUB domain) with PLAT (via kringle domain). Post-translationally, proteolytic removal of the N-terminal CUB domain releasing the core domain is necessary for unmasking the receptor-binding epitopes of the core domain. Cleavage after basic residues in the hinge region (region connecting the CUB and growth factor domains) gives rise to the receptor-binding form. Cleaved by PLAT and PLG. Sumoylated with SUMO1. In terms of processing, N-glycosylated. Highly expressed in the kidney and adrenal gland. In the kidney, it is expressed in arteriolar smooth muscle cells and in epithelial cells of individual segments (at protein level).

The protein resides in the cytoplasm. Its subcellular location is the cytosol. It localises to the secreted. The protein localises to the nucleus. It is found in the cytoplasmic granule. The protein resides in the cell membrane. Functionally, growth factor that plays an essential role in the regulation of embryonic development, cell proliferation, cell migration, survival and chemotaxis. Potent mitogen and chemoattractant for cells of mesenchymal origin. Required for normal skeleton formation during embryonic development, especially for normal development of the craniofacial skeleton and for normal development of the palate. Required for normal skin morphogenesis during embryonic development. Plays an important role in wound healing, where it appears to be involved in three stages: inflammation, proliferation and remodeling. Plays an important role in angiogenesis and blood vessel development. Involved in fibrotic processes, in which transformation of interstitial fibroblasts into myofibroblasts plus collagen deposition occurs. The CUB domain has mitogenic activity in coronary artery smooth muscle cells, suggesting a role beyond the maintenance of the latency of the PDGF domain. In the nucleus, PDGFC seems to have additional function. This is Platelet-derived growth factor C (Pdgfc) from Rattus norvegicus (Rat).